The chain runs to 129 residues: Small ribosomal subunit protein uS11 (129 aa).

The protein belongs to the universal ribosomal protein uS11 family. As to quaternary structure, part of the 30S ribosomal subunit. Interacts with proteins S7 and S18. Binds to IF-3.

Located on the platform of the 30S subunit, it bridges several disparate RNA helices of the 16S rRNA. Forms part of the Shine-Dalgarno cleft in the 70S ribosome. The chain is Small ribosomal subunit protein uS11 from Enterococcus faecalis (strain ATCC 700802 / V583).